A 449-amino-acid chain; its full sequence is Putative BTB/POZ domain-containing protein L742 (449 aa).

The 70-residue stretch at glutamate 79–glycine 148 folds into the BTB domain.

It belongs to the mimivirus BTB/WD family.

In Acanthamoeba polyphaga mimivirus (APMV), this protein is Putative BTB/POZ domain-containing protein L742.